Here is a 79-residue protein sequence, read N- to C-terminus: Sulfur carrier protein TusA (79 aa).

C17 serves as the catalytic Cysteine persulfide intermediate.

Belongs to the sulfur carrier protein TusA family.

Its subcellular location is the cytoplasm. Functionally, sulfur carrier protein which probably makes part of a sulfur-relay system. In Actinobacillus pleuropneumoniae serotype 5b (strain L20), this protein is Sulfur carrier protein TusA.